The sequence spans 239 residues: Ureidoacrylate amidohydrolase RutB (239 aa).

Aspartate 35 (proton acceptor) is an active-site residue. The active site involves lysine 144. Cysteine 177 functions as the Nucleophile in the catalytic mechanism.

The protein belongs to the isochorismatase family. RutB subfamily.

It carries out the reaction (Z)-3-ureidoacrylate + H2O + H(+) = (Z)-3-aminoacrylate + NH4(+) + CO2. The enzyme catalyses (Z)-3-ureidoacrylate + H2O = (Z)-3-aminoacrylate + carbamate + H(+). The catalysed reaction is (Z)-2-methylureidoacrylate + H2O + H(+) = (Z)-2-methylaminoacrylate + NH4(+) + CO2. Functionally, hydrolyzes ureidoacrylate to form aminoacrylate and carbamate. The carbamate hydrolyzes spontaneously, thereby releasing one of the nitrogen atoms of the pyrimidine ring as ammonia and one of its carbon atoms as CO2. This is Ureidoacrylate amidohydrolase RutB from Caulobacter segnis (strain ATCC 21756 / DSM 7131 / JCM 7823 / NBRC 15250 / LMG 17158 / TK0059) (Mycoplana segnis).